The following is a 249-amino-acid chain: Probable transcriptional regulatory protein LBJ_0543 (249 aa).

Belongs to the TACO1 family.

The protein resides in the cytoplasm. The protein is Probable transcriptional regulatory protein LBJ_0543 of Leptospira borgpetersenii serovar Hardjo-bovis (strain JB197).